The chain runs to 408 residues: UPF0761 membrane protein NMC0462 (408 aa).

The next 6 helical transmembrane spans lie at 43 to 63 (LLAL…FPVF), 100 to 120 (LTAI…RTID), 139 to 159 (FLVY…GISF), 176 to 196 (WSGA…LWGL), 210 to 230 (AFVG…LFTW), and 248 to 268 (VPFF…GAVL).

It belongs to the UPF0761 family.

Its subcellular location is the cell inner membrane. The chain is UPF0761 membrane protein NMC0462 from Neisseria meningitidis serogroup C / serotype 2a (strain ATCC 700532 / DSM 15464 / FAM18).